A 108-amino-acid chain; its full sequence is UPF0060 membrane protein Nham_2004 (108 aa).

A run of 4 helical transmembrane segments spans residues 5-25, 31-51, 61-81, and 88-108; these read AAYV…WAWL, VWWL…LTLV, AAYG…VEGL, and LTGA…PRQI.

Belongs to the UPF0060 family.

It localises to the cell inner membrane. This is UPF0060 membrane protein Nham_2004 from Nitrobacter hamburgensis (strain DSM 10229 / NCIMB 13809 / X14).